Consider the following 264-residue polypeptide: Ubiquinone biosynthesis protein COQ4 homolog, mitochondrial (264 aa).

The transit peptide at 1 to 26 (MMQRCWQISLPLARRRLIPSLTSKRT) directs the protein to the mitochondrion. Zn(2+)-binding residues include H169, D170, H173, and E185.

It belongs to the COQ4 family. In terms of assembly, component of a multi-subunit COQ enzyme complex. The cofactor is Zn(2+).

Its subcellular location is the mitochondrion inner membrane. It catalyses the reaction a 4-hydroxy-3-methoxy-5-(all-trans-polyprenyl)benzoate + H(+) = a 2-methoxy-6-(all-trans-polyprenyl)phenol + CO2. It functions in the pathway cofactor biosynthesis; ubiquinone biosynthesis. In terms of biological role, lyase that catalyzes the C1-decarboxylation of 4-hydroxy-3-methoxy-5-(all-trans-polyprenyl)benzoic acid into 2-methoxy-6-(all-trans-polyprenyl)phenol during ubiquinone biosynthesis. This chain is Ubiquinone biosynthesis protein COQ4 homolog, mitochondrial, found in Drosophila grimshawi (Hawaiian fruit fly).